Here is a 154-residue protein sequence, read N- to C-terminus: Probable chemoreceptor glutamine deamidase CheD (154 aa).

Belongs to the CheD family.

It catalyses the reaction L-glutaminyl-[protein] + H2O = L-glutamyl-[protein] + NH4(+). Probably deamidates glutamine residues to glutamate on methyl-accepting chemotaxis receptors (MCPs), playing an important role in chemotaxis. In Methanococcus maripaludis (strain C5 / ATCC BAA-1333), this protein is Probable chemoreceptor glutamine deamidase CheD.